We begin with the raw amino-acid sequence, 190 residues long: 2-phospho-L-lactate guanylyltransferase (190 aa).

This sequence belongs to the CofC family. As to quaternary structure, homodimer.

It catalyses the reaction (2S)-2-phospholactate + GTP + H(+) = (2S)-lactyl-2-diphospho-5'-guanosine + diphosphate. Its pathway is cofactor biosynthesis; coenzyme F420 biosynthesis. Its function is as follows. Guanylyltransferase that catalyzes the activation of (2S)-2-phospholactate (2-PL) as (2S)-lactyl-2-diphospho-5'-guanosine, via the condensation of 2-PL with GTP. It is involved in the biosynthesis of coenzyme F420, a hydride carrier cofactor. The polypeptide is 2-phospho-L-lactate guanylyltransferase (Methanopyrus kandleri (strain AV19 / DSM 6324 / JCM 9639 / NBRC 100938)).